Here is a 1500-residue protein sequence, read N- to C-terminus: Alpha-1-macroglobulin (1500 aa).

An N-terminal signal peptide occupies residues 1 to 24 (MRRNQLPIPVFLLLLLLLPRDATA). Cys48 and Cys86 form a disulfide bridge. Asn55, Asn61, and Asn157 each carry an N-linked (GlcNAc...) asparagine glycan. 2 cysteine pairs are disulfide-bonded: Cys249–Cys298 and Cys267–Cys286. 2 N-linked (GlcNAc...) asparagine glycosylation sites follow: Asn382 and Asn412. Cys469 and Cys562 form a disulfide bridge. N-linked (GlcNAc...) asparagine glycosylation occurs at Asn568. 6 cysteine pairs are disulfide-bonded: Cys594-Cys785, Cys642-Cys689, Cys835-Cys863, Cys861-Cys897, Cys935-Cys1344, and Cys1094-Cys1142. Residues 686–746 (PRYCPMYQAY…QEVEVRETVR (61 aa)) are bait region. Residues Asn883 and Asn944 are each glycosylated (N-linked (GlcNAc...) asparagine). Positions 986-989 (CGEQ) form a cross-link, isoglutamyl cysteine thioester (Cys-Gln). N-linked (GlcNAc...) asparagine glycosylation occurs at Asn1005. The tract at residues 1360–1500 (EGEAPFTLKV…FSSDSEQGNA (141 aa)) is receptor-binding domain. Asn1390 and Asn1448 each carry an N-linked (GlcNAc...) asparagine glycan.

Belongs to the protease inhibitor I39 (alpha-2-macroglobulin) family. Homotetramer; disulfide-linked. In terms of tissue distribution, widely expressed. Highest level in ovary, testis, uterus and prostate. Protein found in plasma.

Its subcellular location is the secreted. Its function is as follows. Is able to inhibit all four classes of proteinases by a unique 'trapping' mechanism. This protein has a peptide stretch, called the 'bait region' which contains specific cleavage sites for different proteinases. When a proteinase cleaves the bait region, a conformational change is induced in the protein which traps the proteinase. The entrapped enzyme remains active against low molecular weight substrates (activity against high molecular weight substrates is greatly reduced). Following cleavage in the bait region a thioester bond is hydrolyzed and mediates the covalent binding of the protein to the proteinase. This chain is Alpha-1-macroglobulin, found in Rattus norvegicus (Rat).